The chain runs to 356 residues: NADH-quinone oxidoreductase subunit H (356 aa).

Transmembrane regions (helical) follow at residues 18 to 38, 87 to 107, 120 to 140, 166 to 186, 202 to 222, 257 to 277, 292 to 312, and 333 to 353; these read IVMV…IAYI, GVFL…WAVI, VGIL…IMGG, IGFV…SAIV, WLTF…VFYV, LFML…AILF, WVPG…LIAM, and FLPL…FAGI.

It belongs to the complex I subunit 1 family. NDH-1 is composed of 14 different subunits. Subunits NuoA, H, J, K, L, M, N constitute the membrane sector of the complex.

Its subcellular location is the cell inner membrane. The enzyme catalyses a quinone + NADH + 5 H(+)(in) = a quinol + NAD(+) + 4 H(+)(out). Its function is as follows. NDH-1 shuttles electrons from NADH, via FMN and iron-sulfur (Fe-S) centers, to quinones in the respiratory chain. The immediate electron acceptor for the enzyme in this species is believed to be ubiquinone. Couples the redox reaction to proton translocation (for every two electrons transferred, four hydrogen ions are translocated across the cytoplasmic membrane), and thus conserves the redox energy in a proton gradient. This subunit may bind ubiquinone. The chain is NADH-quinone oxidoreductase subunit H from Nitrobacter winogradskyi (strain ATCC 25391 / DSM 10237 / CIP 104748 / NCIMB 11846 / Nb-255).